The sequence spans 933 residues: Progesterone receptor (933 aa).

The tract at residues 1 to 48 is disordered; that stretch reads MTELKAKGPRAPHVAGGPPSPEVGSPLLCRPAAGPFEGSQTSDTLPEV. Residues 1–164 are AF3; mediates transcriptional activation; sequence MTELKAKGPR…PATQRVLSPL (164 aa). The tract at residues 1 to 566 is modulating, Pro-Rich; the sequence is MTELKAKGPR…YSFESLPQKI (566 aa). A Phosphoserine modification is found at S20. The LXXL motif 1 signature appears at 55–59; the sequence is LDGLL. The disordered stretch occupies residues 66-255; it reads GQDLPDEKTQ…GAAAGGGAAA (190 aa). S81 carries the post-translational modification Phosphoserine. An LXXL motif 2 motif is present at residues 115–119; that stretch reads LDTLL. 2 positions are modified to phosphoserine: S130 and S162. The segment at 165 to 305 is mediates transcriptional transrepression; that stretch reads MSRSGGKTGD…LATTMMDFIH (141 aa). The short motif at 183-187 is the Nuclear localization signal element; the sequence is KVLPR. 2 positions are modified to phosphoserine: S190 and S213. Position 294 is a phosphoserine; by MAPK1 (S294). The segment at 331 to 378 is disordered; that stretch reads GGAGAASAFAPPQSSPSASSTPVAVGDFPDCAYPPDAEPKDNAYPLYG. Low complexity predominate over residues 335 to 350; that stretch reads AASAFAPPQSSPSASS. S345 is subject to Phosphoserine; by MAPK. K388 is covalently cross-linked (Glycyl lysine isopeptide (Lys-Gly) (interchain with G-Cter in SUMO); alternate). Residue K388 forms a Glycyl lysine isopeptide (Lys-Gly) (interchain with G-Cter in ubiquitin); alternate linkage. The residue at position 400 (S400) is a Phosphoserine; by CDK2. Residues 415–454 are disordered; it reads PDYPLGPPPQLPPRAPPSRPGEAAVTAAPASASVSSASSP. Over residues 418–433 the composition is skewed to pro residues; that stretch reads PLGPPPQLPPRAPPSR. A compositionally biased stretch (low complexity) spans 437–454; that stretch reads AAVTAAPASASVSSASSP. The interval 456 to 546 is AF1; mediates transcriptional activation; sequence STLECILYKA…VYPPYLNYLR (91 aa). Residue K531 forms a Glycyl lysine isopeptide (Lys-Gly) (interchain with G-Cter in SUMO) linkage. 2 consecutive NR C4-type zinc fingers follow at residues 567–587 and 603–627; these read CLIC…CGSC and CAGR…LRKC. The segment at residues 567 to 639 is a DNA-binding region (nuclear receptor); that stretch reads CLICGDEASG…AGMVLGGRKF (73 aa). Position 676 is a phosphoserine (S676). The NR LBD domain occupies 679-913; it reads QDIQLIPPLI…EFPEMMSEVI (235 aa). Residues 687-933 form an AF2; mediates transcriptional activation region; it reads LIKLLMSIEP…MVKPLLFHKK (247 aa).

Belongs to the nuclear hormone receptor family. In terms of assembly, interacts with SMARD1 and UNC45A. Interacts with CUEDC2; the interaction promotes ubiquitination, decreases sumoylation, and represses transcriptional activity. Interacts with PIAS3; the interaction promotes sumoylation of PR in a hormone-dependent manner, inhibits DNA-binding, and alters nuclear export. Interacts with SP1; the interaction requires ligand-induced phosphorylation on Ser-345 by ERK1/2-MAPK. Interacts with PRMT2. Interacts with NCOA2 and NCOA1. Interacts with KLF9. Interacts with GTF2B. In terms of processing, phosphorylated on multiple serine sites. Several of these sites are hormone-dependent. Phosphorylation on Ser-294 is highly hormone-dependent and modulates ubiquitination and sumoylation on Lys-388. Phosphorylation on Ser-345 also requires induction by hormone. Basal phosphorylation on Ser-81, Ser-162, Ser-190 and Ser-400 is increased in response to progesterone and can be phosphorylated in vitro by the CDK2-A1 complex. Increased levels of phosphorylation on Ser-400 also in the presence of EGF, heregulin, IGF, PMA and FBS. Phosphorylation at this site by CDK2 is ligand-independent, and increases nuclear translocation and transcriptional activity. Phosphorylation at Ser-162 and Ser-294, but not at Ser-190, is impaired during the G(2)/M phase of the cell cycle. Phosphorylation on Ser-345 by ERK1/2 MAPK is required for interaction with SP1. Sumoylation is hormone-dependent and represses transcriptional activity. Sumoylation on all three sites is enhanced by PIAS3. Desumoylated by SENP1. Sumoylation on Lys-388, the main site of sumoylation, is repressed by ubiquitination on the same site, and modulated by phosphorylation at Ser-294. Post-translationally, ubiquitination is hormone-dependent and represses sumoylation on the same site. Promoted by MAPK-mediated phosphorylation on Ser-294. In terms of processing, palmitoylated by ZDHHC7 and ZDHHC21. Palmitoylation is required for plasma membrane targeting and for rapid intracellular signaling via ERK and AKT kinases and cAMP generation.

The protein localises to the nucleus. The protein resides in the cytoplasm. The steroid hormones and their receptors are involved in the regulation of eukaryotic gene expression and affect cellular proliferation and differentiation in target tissues. Transcriptional activator of several progesteron-dependent promoters in a variety of cell types. Involved in activation of SRC-dependent MAPK signaling on hormone stimulation. This is Progesterone receptor (PGR) from Trachypithecus obscurus (Dusky leaf-monkey).